We begin with the raw amino-acid sequence, 338 residues long: uncharacterized protein (338 aa).

The first 29 residues, methionine 1–alanine 29, serve as a signal peptide directing secretion.

This sequence belongs to the aerolysin family.

This is an uncharacterized protein from Staphylococcus aureus (strain Mu50 / ATCC 700699).